We begin with the raw amino-acid sequence, 174 residues long: Urease accessory protein UreE (174 aa).

Residues 146–174 (NGAYATGGHAHDHDGEPEHVHGPGCQHAH) are disordered. Residues 154-166 (HAHDHDGEPEHVH) are compositionally biased toward basic and acidic residues.

This sequence belongs to the UreE family.

The protein resides in the cytoplasm. Involved in urease metallocenter assembly. Binds nickel. Probably functions as a nickel donor during metallocenter assembly. The polypeptide is Urease accessory protein UreE (Albidiferax ferrireducens (strain ATCC BAA-621 / DSM 15236 / T118) (Rhodoferax ferrireducens)).